A 187-amino-acid chain; its full sequence is Inosine triphosphate pyrophosphatase (187 aa).

11–16 (TSNKNK) is an ITP binding site. Residue Glu39 participates in Mg(2+) binding. Residues Lys51, 67-68 (DT), Lys84, 143-146 (FGWD), Lys164, and 169-170 (HR) contribute to the ITP site.

The protein belongs to the HAM1 NTPase family. Homodimer. Mg(2+) serves as cofactor. Requires Mn(2+) as cofactor.

The protein resides in the cytoplasm. It localises to the nucleus. The catalysed reaction is ITP + H2O = IMP + diphosphate + H(+). The enzyme catalyses dITP + H2O = dIMP + diphosphate + H(+). It catalyses the reaction XTP + H2O = XMP + diphosphate + H(+). Its function is as follows. Pyrophosphatase that hydrolyzes non-canonical purine nucleotides such as inosine triphosphate (ITP), deoxyinosine triphosphate (dITP) or xanthosine 5'-triphosphate (XTP) to their respective monophosphate derivatives. The enzyme does not distinguish between the deoxy- and ribose forms. Probably excludes non-canonical purines from RNA and DNA precursor pools, thus preventing their incorporation into RNA and DNA and avoiding chromosomal lesions. In Aspergillus fumigatus (strain ATCC MYA-4609 / CBS 101355 / FGSC A1100 / Af293) (Neosartorya fumigata), this protein is Inosine triphosphate pyrophosphatase.